The sequence spans 168 residues: Cyclin-dependent kinase 4 inhibitor C (168 aa).

4 ANK repeats span residues 4–33 (PWGN…NVNA), 37–65 (FGRT…NPDL), 69–98 (TGFA…DVNI), and 102–132 (EGNL…NVGH).

It belongs to the CDKN2 cyclin-dependent kinase inhibitor family. In terms of assembly, heterodimer of p18 with CDK6. In terms of tissue distribution, highest levels found in skeletal muscle. Also found in pancreas and heart.

Interacts strongly with CDK6, weakly with CDK4. Inhibits cell growth and proliferation with a correlated dependence on endogenous retinoblastoma protein RB. This is Cyclin-dependent kinase 4 inhibitor C (CDKN2C) from Homo sapiens (Human).